The primary structure comprises 503 residues: Anaerobic nitric oxide reductase flavorubredoxin (503 aa).

Positions 30–210 (LQGSSYNSYL…PFSRLVTAKI (181 aa)) are zinc metallo-hydrolase. Fe cation contacts are provided by His-79, Glu-81, Asp-83, His-147, Asp-166, and His-227. In terms of domain architecture, Flavodoxin-like spans 254–393 (ITLFYDTMSN…ICREHGREIA (140 aa)). Residues 260–264 (TMSNN) and 342–369 (AFGS…ETTL) contribute to the FMN site. The region spanning 451–502 (NGCMQCSVCQWIYDPALGEPMQDVTPGTMWSDVPDSFLCPECGLGKDVFNPI) is the Rubredoxin-like domain. Fe cation is bound by residues Cys-456, Cys-459, Cys-489, and Cys-492.

It in the N-terminal section; belongs to the zinc metallo-hydrolase group 3 family. As to quaternary structure, homotetramer. Fe cation is required as a cofactor. It depends on FMN as a cofactor.

It localises to the cytoplasm. The protein operates within nitrogen metabolism; nitric oxide reduction. In terms of biological role, anaerobic nitric oxide reductase; uses NADH to detoxify nitric oxide (NO), protecting several 4Fe-4S NO-sensitive enzymes. Has at least 2 reductase partners, only one of which (NorW, flavorubredoxin reductase) has been identified. NO probably binds to the di-iron center; electrons enter from the NorW at rubredoxin and are transferred sequentially to the FMN center and the di-iron center. Also able to function as an aerobic oxygen reductase. The chain is Anaerobic nitric oxide reductase flavorubredoxin from Pectobacterium carotovorum subsp. carotovorum (strain PC1).